A 357-amino-acid polypeptide reads, in one-letter code: S-adenosylmethionine:tRNA ribosyltransferase-isomerase (357 aa).

This sequence belongs to the QueA family. In terms of assembly, monomer.

The protein resides in the cytoplasm. The catalysed reaction is 7-aminomethyl-7-carbaguanosine(34) in tRNA + S-adenosyl-L-methionine = epoxyqueuosine(34) in tRNA + adenine + L-methionine + 2 H(+). Its pathway is tRNA modification; tRNA-queuosine biosynthesis. Its function is as follows. Transfers and isomerizes the ribose moiety from AdoMet to the 7-aminomethyl group of 7-deazaguanine (preQ1-tRNA) to give epoxyqueuosine (oQ-tRNA). The polypeptide is S-adenosylmethionine:tRNA ribosyltransferase-isomerase (Edwardsiella ictaluri (strain 93-146)).